The sequence spans 78 residues: Acyl carrier protein (78 aa).

Positions 2–77 (STIEERVKKI…AAIDYINGHQ (76 aa)) constitute a Carrier domain. At Ser-37 the chain carries O-(pantetheine 4'-phosphoryl)serine.

It belongs to the acyl carrier protein (ACP) family. In terms of processing, 4'-phosphopantetheine is transferred from CoA to a specific serine of apo-ACP by AcpS. This modification is essential for activity because fatty acids are bound in thioester linkage to the sulfhydryl of the prosthetic group.

The protein resides in the cytoplasm. Its pathway is lipid metabolism; fatty acid biosynthesis. Functionally, carrier of the growing fatty acid chain in fatty acid biosynthesis. In Shigella flexneri, this protein is Acyl carrier protein.